A 669-amino-acid polypeptide reads, in one-letter code: MIEDVEDEILRLKNIIKRWNREYYVDSSPSVGDLTYDKALLRLQDLESKYPEYKTLDSPTFRFGSDLLNDFEEVKHSFPILSLDKTYDIKGLSLWIEKMVLESAISGLHTGISVEPKIDGCSIVLHYKDGILEKALTRGDGRVGNDVTENVKTIRNVPLRIDEKIELVLRGEIYITKENFLKINRTLKNPYVNARNLASGILRRISSKEVANFPLDIFVYDILYSSLKLNTSHDAFDKLKQFGFKVNPFCEFFGGKNLEAGIIAHVKKIEALRDSFEYEIDGVVLKIDSFILRKILGSTSHHPKWSIAYKFESCTGMSKVVDIVVQVGRSGKITPVAHVEKVLVAGASITNASLHNQDYIDFVGLNVGDIVVISRRGDVIPAVDLVIEKLAVGSFKIPSNCPSCKMTLIKEGAHLFCVNRHCSCRIIEQVKYFCSKKCMNIVGLSEKTIEFLFEKKFISSEVELYTFNCDRLINLKGFNLKRINNLKRSIEDSKSRPFRKLLLGMGIKDLGENTILVLINNNLNSFDTISTLCKNKEAALAKLLKIKGIGERIALNIIEAFNDKTILDKFNFFKELGLKMEEDNTNDAVYDSFLFGKKFCITGSFKGYSRDVLIEKLTKKGAVFSRSVTKCLDFLLVGEKFGLKVQKANNLGIKTFSLFDIKDFVDLDD.

Residues 33-37 (DLTYD), 82-83 (SL), and Glu-115 each bind NAD(+). Residue Lys-117 is the N6-AMP-lysine intermediate of the active site. 4 residues coordinate NAD(+): Arg-138, Glu-172, Lys-286, and Lys-310. 4 residues coordinate Zn(2+): Cys-401, Cys-404, Cys-417, and Cys-422.

It belongs to the NAD-dependent DNA ligase family. LigA subfamily. Mg(2+) is required as a cofactor. The cofactor is Mn(2+).

The enzyme catalyses NAD(+) + (deoxyribonucleotide)n-3'-hydroxyl + 5'-phospho-(deoxyribonucleotide)m = (deoxyribonucleotide)n+m + AMP + beta-nicotinamide D-nucleotide.. Its function is as follows. DNA ligase that catalyzes the formation of phosphodiester linkages between 5'-phosphoryl and 3'-hydroxyl groups in double-stranded DNA using NAD as a coenzyme and as the energy source for the reaction. It is essential for DNA replication and repair of damaged DNA. This chain is DNA ligase, found in Borrelia hermsii (strain HS1 / DAH).